The following is a 397-amino-acid chain: uncharacterized protein (397 aa).

2 disordered regions span residues 159–203 (LNSS…KSTI) and 221–397 (NSVK…KTKN). Residues 221-240 (NSVKSSPSKSFVSISSPVQS) show a composition bias toward low complexity. Polar residues-rich tracts occupy residues 285-309 (TSTLDASSSNTSLASTGPMTVSSST) and 320-330 (VNPNSTSSVTF). The zn(2)-C6 fungal-type DNA-binding region spans 342–371 (CSRCKKSKKGCDRQRPCGRCRDAGLNSEDC). The span at 350-363 (KGCDRQRPCGRCRD) shows a compositional bias: basic and acidic residues. Positions 383–397 (RKPRGRGRGRPKTKN) are enriched in basic residues.

It localises to the nucleus. This is an uncharacterized protein from Schizosaccharomyces pombe (strain 972 / ATCC 24843) (Fission yeast).